The chain runs to 469 residues: NADH-quinone oxidoreductase subunit N (469 aa).

14 helical membrane-spanning segments follow: residues 2–22, 28–48, 70–90, 101–121, 122–142, 157–177, 194–214, 233–253, 261–281, 290–310, 315–335, 361–381, 398–418, and 447–467; these read IALLPFILSLAATFINIFLCV, RYSINLNILFWVIIFISFFIV, FSFCFGVVLSALMIIFLISSF, EMFALASLAGFGLLAMSLSVE, LILTLIFLEVASISIYAMIAM, FLLSSFMSAFYLLGAAFVFGV, FLSIIGMILVLSMMFFKIAIF, GFLASAFKLASFAILIKLCFL, ILQGIFAILAILSMFAGNLLS, ILIAAGIVHSGYIFINLSSVG, IYPAIFYLSTYTIVVGFLFAI, AFAFTVICLSFIGFPYSVGFL, LAIFGIINTIFSVYYYLKIII, and ILFIILEGSGIFSIISFLNLF.

It belongs to the complex I subunit 2 family. NDH-1 is composed of 14 different subunits. Subunits NuoA, H, J, K, L, M, N constitute the membrane sector of the complex.

The protein localises to the cell inner membrane. It carries out the reaction a quinone + NADH + 5 H(+)(in) = a quinol + NAD(+) + 4 H(+)(out). Its function is as follows. NDH-1 shuttles electrons from NADH, via FMN and iron-sulfur (Fe-S) centers, to quinones in the respiratory chain. The immediate electron acceptor for the enzyme in this species is believed to be ubiquinone. Couples the redox reaction to proton translocation (for every two electrons transferred, four hydrogen ions are translocated across the cytoplasmic membrane), and thus conserves the redox energy in a proton gradient. The sequence is that of NADH-quinone oxidoreductase subunit N from Campylobacter fetus subsp. fetus (strain 82-40).